The primary structure comprises 317 residues: tRNA dimethylallyltransferase (317 aa).

14–21 (GPTAVGKT) contributes to the ATP binding site. 16–21 (TAVGKT) serves as a coordination point for substrate. Residues 39–42 (DSMQ) are interaction with substrate tRNA.

Belongs to the IPP transferase family. In terms of assembly, monomer. It depends on Mg(2+) as a cofactor.

It carries out the reaction adenosine(37) in tRNA + dimethylallyl diphosphate = N(6)-dimethylallyladenosine(37) in tRNA + diphosphate. Its function is as follows. Catalyzes the transfer of a dimethylallyl group onto the adenine at position 37 in tRNAs that read codons beginning with uridine, leading to the formation of N6-(dimethylallyl)adenosine (i(6)A). The chain is tRNA dimethylallyltransferase from Bacillus mycoides (strain KBAB4) (Bacillus weihenstephanensis).